Reading from the N-terminus, the 346-residue chain is uncharacterized protein (346 aa).

An N-terminal signal peptide occupies residues 1-27 (MKFNKISLSVSTALLAAGLAVSGSANA).

This is an uncharacterized protein from Haemophilus influenzae (strain ATCC 51907 / DSM 11121 / KW20 / Rd).